The primary structure comprises 520 residues: Basal body-orientation factor 1 (520 aa).

Positions 1 to 21 (MPKKKGKGKGKGKGKGKGKKD) are enriched in basic residues. The disordered stretch occupies residues 1 to 34 (MPKKKGKGKGKGKGKGKGKKDGKHDSKADRESEI). A compositionally biased stretch (basic and acidic residues) spans 22 to 34 (GKHDSKADRESEI). 2 coiled-coil regions span residues 27-175 (KADR…REKM) and 245-386 (VKEA…RQEA). A disordered region spans residues 468-492 (AHPPALSASSSEKIQVSSDAGSTVE). Residues 469–478 (HPPALSASSS) are compositionally biased toward low complexity. Positions 479–492 (EKIQVSSDAGSTVE) are enriched in polar residues.

The protein belongs to the BBOF1 family.

Its subcellular location is the cytoplasm. It localises to the cytoskeleton. The protein localises to the cilium basal body. Its function is as follows. Basal body protein required in multiciliate cells to align and maintain cilia orientation in response to flow. May act by mediating a maturation step that stabilizes and aligns cilia orientation. Not required to respond to planar cell polarity (PCP) or flow-based orientation cues. This is Basal body-orientation factor 1 from Danio rerio (Zebrafish).